The primary structure comprises 86 residues: Progonadoliberin IIA (86 aa).

A signal peptide spans 1–24 (MVHICRLFVVMGMLLCLSAQFASS). Gln25 carries the post-translational modification Pyrrolidone carboxylic acid. Residue Gly34 is modified to Glycine amide.

The protein belongs to the GnRH family. As to expression, olfactory bulbs, hypothalamus and telencephalon, midbrain and posterior brain areas.

Its subcellular location is the secreted. Stimulates the secretion of gonadotropins. In Carassius auratus (Goldfish), this protein is Progonadoliberin IIA (gnrh2a).